The following is a 93-amino-acid chain: Phosphoribosyl-ATP pyrophosphatase (93 aa).

The protein belongs to the PRA-PH family.

Its subcellular location is the cytoplasm. It carries out the reaction 1-(5-phospho-beta-D-ribosyl)-ATP + H2O = 1-(5-phospho-beta-D-ribosyl)-5'-AMP + diphosphate + H(+). It participates in amino-acid biosynthesis; L-histidine biosynthesis; L-histidine from 5-phospho-alpha-D-ribose 1-diphosphate: step 2/9. This is Phosphoribosyl-ATP pyrophosphatase from Mycolicibacterium gilvum (strain PYR-GCK) (Mycobacterium gilvum (strain PYR-GCK)).